The chain runs to 168 residues: G/U mismatch-specific DNA glycosylase (168 aa).

It belongs to the uracil-DNA glycosylase (UDG) superfamily. TDG/mug family. As to quaternary structure, binds DNA as a monomer.

The protein resides in the cytoplasm. The enzyme catalyses Specifically hydrolyzes mismatched double-stranded DNA and polynucleotides, releasing free uracil.. In terms of biological role, excises ethenocytosine and uracil, which can arise by alkylation or deamination of cytosine, respectively, from the corresponding mispairs with guanine in ds-DNA. It is capable of hydrolyzing the carbon-nitrogen bond between the sugar-phosphate backbone of the DNA and the mispaired base. The complementary strand guanine functions in substrate recognition. Required for DNA damage lesion repair in stationary-phase cells. This chain is G/U mismatch-specific DNA glycosylase, found in Escherichia fergusonii (strain ATCC 35469 / DSM 13698 / CCUG 18766 / IAM 14443 / JCM 21226 / LMG 7866 / NBRC 102419 / NCTC 12128 / CDC 0568-73).